The sequence spans 507 residues: ATP synthase subunit alpha, chloroplastic (507 aa).

An ATP-binding site is contributed by glycine 170–threonine 177.

It belongs to the ATPase alpha/beta chains family. As to quaternary structure, F-type ATPases have 2 components, CF(1) - the catalytic core - and CF(0) - the membrane proton channel. CF(1) has five subunits: alpha(3), beta(3), gamma(1), delta(1), epsilon(1). CF(0) has four main subunits: a, b, b' and c.

The protein resides in the plastid. It is found in the chloroplast thylakoid membrane. The catalysed reaction is ATP + H2O + 4 H(+)(in) = ADP + phosphate + 5 H(+)(out). In terms of biological role, produces ATP from ADP in the presence of a proton gradient across the membrane. The alpha chain is a regulatory subunit. This chain is ATP synthase subunit alpha, chloroplastic, found in Chloranthus spicatus (Chulantree).